A 138-amino-acid polypeptide reads, in one-letter code: Protein transport protein got1 homolog (138 aa).

Topologically, residues 1-7 are cytoplasmic; that stretch reads MFTDQQK. Residues 8–28 traverse the membrane as a helical segment; that stretch reads IGAMLSAMGLFFGFLGVLLFL. At 29-30 the chain is on the lumenal side; the sequence is DR. A helical transmembrane segment spans residues 31 to 51; it reads NLLALGNLLLVSGIVLILGLQ. Over 52-62 the chain is Cytoplasmic; that stretch reads KTTKFFAQKKK. A helical membrane pass occupies residues 63-82; the sequence is IKGTILFFFGIVVLLVTRWT. Residues 83–87 lie on the Lumenal side of the membrane; that stretch reads FVGMV. The helical transmembrane segment at 88–108 threads the bilayer; the sequence is IEIFGFVNLFGDAFPIVISIL. Topologically, residues 109-138 are cytoplasmic; sequence RKLPIIGNILNHPLVNRLLQKADSGNELPF.

This sequence belongs to the GOT1 family.

It localises to the golgi apparatus membrane. In terms of biological role, may be involved in fusion of ER-derived transport vesicles with the Golgi complex. In Dictyostelium discoideum (Social amoeba), this protein is Protein transport protein got1 homolog (golt1).